Reading from the N-terminus, the 322-residue chain is MAVPASDGSTASEWVTTGSVTVRVPGKVNLYLSVGDLRDDGYHDLTTVFHAVSLLDEVTVRNADVLSLRMIGEGAESLPADERNLAWRAAELMAEHVGRAPDVEITIEKSIPVAGGMAGGSADAAGVLVAMNTLWELGVPRRDLHALAAQLGSDVPFALHGGTALGSGRGEDLATVLARNTFHWVLAFAHRGLSTPKVFGELDRLRADTTRGLPRTDEPEPVLAALASGDPAELAALLGNDLQPAALSLYPDLRRTLRAGVEAGALAGIVSGSGPTCAFLCASAPAALDVGTQLSGAGVCRTVRVASGPVHGAHVVPAPSAS.

Residue Lys-27 is part of the active site. An ATP-binding site is contributed by 112–122 (PVAGGMAGGSA). The active site involves Asp-154.

Belongs to the GHMP kinase family. IspE subfamily.

The catalysed reaction is 4-CDP-2-C-methyl-D-erythritol + ATP = 4-CDP-2-C-methyl-D-erythritol 2-phosphate + ADP + H(+). Its pathway is isoprenoid biosynthesis; isopentenyl diphosphate biosynthesis via DXP pathway; isopentenyl diphosphate from 1-deoxy-D-xylulose 5-phosphate: step 3/6. In terms of biological role, catalyzes the phosphorylation of the position 2 hydroxy group of 4-diphosphocytidyl-2C-methyl-D-erythritol. The polypeptide is 4-diphosphocytidyl-2-C-methyl-D-erythritol kinase (Mycolicibacterium smegmatis (strain ATCC 700084 / mc(2)155) (Mycobacterium smegmatis)).